The primary structure comprises 378 residues: tRNA (guanine(37)-N(1))-methyltransferase (378 aa).

S-adenosyl-L-methionine contacts are provided by residues His-196, 234–235, 262–263, and Asn-282; these read DL and DA.

This sequence belongs to the class I-like SAM-binding methyltransferase superfamily. TRM5/TYW2 family. As to quaternary structure, monomer.

The protein localises to the mitochondrion matrix. The protein resides in the nucleus. It is found in the cytoplasm. The catalysed reaction is guanosine(37) in tRNA + S-adenosyl-L-methionine = N(1)-methylguanosine(37) in tRNA + S-adenosyl-L-homocysteine + H(+). Functionally, specifically methylates the N1 position of guanosine-37 in various cytoplasmic and mitochondrial tRNAs. Methylation is not dependent on the nature of the nucleoside 5' of the target nucleoside. This is the first step in the biosynthesis of wybutosine (yW), a modified base adjacent to the anticodon of tRNAs and required for accurate decoding. The polypeptide is tRNA (guanine(37)-N(1))-methyltransferase (Trichomonas vaginalis (strain ATCC PRA-98 / G3)).